The primary structure comprises 539 residues: Inositol 1,4,5-triphosphate receptor associated 2 (539 aa).

3 disordered regions span residues 1-21 (MLCVKGPPEQEPEDGALDVTR), 69-98 (YLTQPSSEQTSSSESTVTSSESGSDILHMA), and 147-171 (AGEELRTTENGGKGSAPGETEISMP). Residues 1 to 479 (MLCVKGPPEQ…LQASFRRANR (479 aa)) lie on the Cytoplasmic side of the membrane. Residues 74 to 92 (SSEQTSSSESTVTSSESGS) show a composition bias toward low complexity. Thr78 is subject to Phosphothreonine. Residues 298 to 326 (MIQHVENLKRMYAKEHAELEDLKQALLQN) adopt a coiled-coil conformation. The segment at 334 to 353 (PDEDDCQIKKRSSSLNSKPS) is disordered. A phosphoserine mark is found at Ser347, Ser354, and Ser408. The segment at 418–449 (ERSDVKARDAPEPQGEEAVERTRKPSLSERRS) is disordered. The span at 435–449 (AVERTRKPSLSERRS) shows a compositional bias: basic and acidic residues. A helical; Anchor for type IV membrane protein transmembrane segment spans residues 480–500 (ALWLTGLIIILIAALMSFLTG). Over 501-539 (QLFQTAVEAAPTQEGDSWLSLEHILWPFTRLGHDGPPPV) the chain is Lumenal.

Belongs to the IRAG2 family. In terms of assembly, interacts (via coiled-coil domain) with ITPR3. Interacts with SUN1 and SUN2. Interacts with microtubules. Interacts with HCN4; regulates HCN4 channel activity. In terms of processing, the removal of the C-terminal lumenal domain occurs by proteolytic processing. As to expression, spleen and thymus. Expressed at high levels in pre B-cells, mature B-cells and pre T-cells. Expressed at low levels in mature T-cells and plasma B-cells. Expressed in circumvallate (CV), foliate (FL) and fungiform (FF) taste papillae cells of the tongue epithelium.

Its subcellular location is the cytoplasm. The protein localises to the endoplasmic reticulum membrane. The protein resides in the nucleus envelope. It localises to the cytoskeleton. It is found in the microtubule organizing center. Its subcellular location is the centrosome. The protein localises to the spindle pole. The protein resides in the chromosome. Functionally, plays a role in the delivery of peptides to major histocompatibility complex (MHC) class I molecules; this occurs in a transporter associated with antigen processing (TAP)-independent manner. May play a role in taste signal transduction via ITPR3. May play a role during fertilization in pronucleus congression and fusion. Plays a role in maintaining nuclear shape, maybe as a component of the LINC complex and through interaction with microtubules. Plays a role in the regulation of cellular excitability by regulating the hyperpolarization-activated cyclic nucleotide-gated HCN4 channel activity. The sequence is that of Inositol 1,4,5-triphosphate receptor associated 2 (Irag2) from Mus musculus (Mouse).